The chain runs to 428 residues: Small ribosomal subunit protein uS2m (428 aa).

Residues 30–50 form a disordered region; the sequence is FLSQDNFTAPPPPPTNSKKQA.

This sequence belongs to the universal ribosomal protein uS2 family. As to quaternary structure, component of the mitochondrial small ribosomal subunit (mt-SSU). Mature N.crassa 74S mitochondrial ribosomes consist of a small (37S) and a large (54S) subunit. The 37S small subunit contains a 16S ribosomal RNA (16S mt-rRNA) and 32 different proteins. The 54S large subunit contains a 23S rRNA (23S mt-rRNA) and 42 different proteins.

The protein localises to the mitochondrion. Functionally, component of the mitochondrial ribosome (mitoribosome), a dedicated translation machinery responsible for the synthesis of mitochondrial genome-encoded proteins, including at least some of the essential transmembrane subunits of the mitochondrial respiratory chain. The mitoribosomes are attached to the mitochondrial inner membrane and translation products are cotranslationally integrated into the membrane. The chain is Small ribosomal subunit protein uS2m (mrp4) from Neurospora crassa (strain ATCC 24698 / 74-OR23-1A / CBS 708.71 / DSM 1257 / FGSC 987).